A 505-amino-acid polypeptide reads, in one-letter code: Activin receptor type-1B (505 aa).

The N-terminal stretch at 1–23 (MAESAGASSFFPLVVLLLAGSGG) is a signal peptide. The Extracellular segment spans residues 24–126 (SGPRGIQALL…AHPSMWGPVE (103 aa)). N-linked (GlcNAc...) asparagine glycosylation occurs at Asn-43. A helical transmembrane segment spans residues 127-149 (LVGIIAGPVFLLFLIIIIVFLVI). The Cytoplasmic portion of the chain corresponds to 150–505 (NYHQRVYHNR…QLSVQEDVKI (356 aa)). Residues 177–206 (KTLQDLVYDLSTSGSGSGLPLFVQRTVART) enclose the GS domain. Residues 207–497 (IVLQEIIGKG…LRIKKTLSQL (291 aa)) enclose the Protein kinase domain. Residues 213 to 221 (IGKGRFGEV) and Lys-234 contribute to the ATP site. Residue Asp-335 is the Proton acceptor of the active site. The residue at position 380 (Tyr-380) is a Phosphotyrosine.

The protein belongs to the protein kinase superfamily. TKL Ser/Thr protein kinase family. TGFB receptor subfamily. As to quaternary structure, forms an activin receptor complex with activin receptor type-2 (ACVR2A or ACVR2B). Part of a complex consisting of MAGI2/ARIP1, ACVR2A, ACVR1B and SMAD3. Interacts with SMAD2 and SMAD3. Interacts with SMAD7. Interacts with FKBP1A. Interacts with IGSF1. Interacts with CRIPTO. Interacts with TDP2. Interacts with TSC22D1/TSC-22. Autophosphorylated. Phosphorylated by activin receptor type-2 (ACVR2A or ACVR2B) in response to activin-binding at serine and threonine residues in the GS domain. Phosphorylation of ACVR1B by activin receptor type-2 regulates association with SMAD7. Post-translationally, ubiquitinated. Level of ubiquitination is regulated by the SMAD7-SMURF1 complex. In terms of processing, ubiquitinated.

The protein resides in the cell membrane. The catalysed reaction is L-threonyl-[receptor-protein] + ATP = O-phospho-L-threonyl-[receptor-protein] + ADP + H(+). It catalyses the reaction L-seryl-[receptor-protein] + ATP = O-phospho-L-seryl-[receptor-protein] + ADP + H(+). Its activity is regulated as follows. Activin receptor type-2 (ACVR2A or ACVR2B) activates the type-1 receptor through phosphorylation of its regulatory GS domain. Transmembrane serine/threonine kinase activin type-1 receptor forming an activin receptor complex with activin receptor type-2 (ACVR2A or ACVR2B). Transduces the activin signal from the cell surface to the cytoplasm and is thus regulating a many physiological and pathological processes including neuronal differentiation and neuronal survival, hair follicle development and cycling, FSH production by the pituitary gland, wound healing, extracellular matrix production, immunosuppression and carcinogenesis. Activin is also thought to have a paracrine or autocrine role in follicular development in the ovary. Within the receptor complex, type-2 receptors (ACVR2A and/or ACVR2B) act as a primary activin receptors whereas the type-1 receptors like ACVR1B act as downstream transducers of activin signals. Activin binds to type-2 receptor at the plasma membrane and activates its serine-threonine kinase. The activated receptor type-2 then phosphorylates and activates the type-1 receptor such as ACVR1B. Once activated, the type-1 receptor binds and phosphorylates the SMAD proteins SMAD2 and SMAD3, on serine residues of the C-terminal tail. Soon after their association with the activin receptor and subsequent phosphorylation, SMAD2 and SMAD3 are released into the cytoplasm where they interact with the common partner SMAD4. This SMAD complex translocates into the nucleus where it mediates activin-induced transcription. Inhibitory SMAD7, which is recruited to ACVR1B through FKBP1A, can prevent the association of SMAD2 and SMAD3 with the activin receptor complex, thereby blocking the activin signal. Activin signal transduction is also antagonized by the binding to the receptor of inhibin-B via the IGSF1 inhibin coreceptor. ACVR1B also phosphorylates TDP2. This Mus musculus (Mouse) protein is Activin receptor type-1B (Acvr1b).